Here is a 283-residue protein sequence, read N- to C-terminus: 3-methyl-2-oxobutanoate hydroxymethyltransferase (283 aa).

2 residues coordinate Mg(2+): Asp44 and Asp83. Residues 44–45 (DS), Asp83, and Lys112 each bind 3-methyl-2-oxobutanoate. A Mg(2+)-binding site is contributed by Glu114. The active-site Proton acceptor is Glu181.

Belongs to the PanB family. As to quaternary structure, homodecamer; pentamer of dimers. Mg(2+) is required as a cofactor.

It is found in the cytoplasm. The catalysed reaction is 3-methyl-2-oxobutanoate + (6R)-5,10-methylene-5,6,7,8-tetrahydrofolate + H2O = 2-dehydropantoate + (6S)-5,6,7,8-tetrahydrofolate. Its pathway is cofactor biosynthesis; coenzyme A biosynthesis. Functionally, catalyzes the reversible reaction in which hydroxymethyl group from 5,10-methylenetetrahydrofolate is transferred onto alpha-ketoisovalerate to form ketopantoate. The chain is 3-methyl-2-oxobutanoate hydroxymethyltransferase from Pyrococcus furiosus (strain ATCC 43587 / DSM 3638 / JCM 8422 / Vc1).